Here is a 437-residue protein sequence, read N- to C-terminus: Histidinol dehydrogenase (437 aa).

NAD(+)-binding residues include tyrosine 137, glutamine 199, and asparagine 222. 3 residues coordinate substrate: serine 245, glutamine 267, and histidine 270. Residues glutamine 267 and histidine 270 each contribute to the Zn(2+) site. Active-site proton acceptor residues include glutamate 335 and histidine 336. Substrate-binding residues include histidine 336, aspartate 369, glutamate 423, and histidine 428. Aspartate 369 contributes to the Zn(2+) binding site. Histidine 428 is a Zn(2+) binding site.

Belongs to the histidinol dehydrogenase family. The cofactor is Zn(2+).

It catalyses the reaction L-histidinol + 2 NAD(+) + H2O = L-histidine + 2 NADH + 3 H(+). It functions in the pathway amino-acid biosynthesis; L-histidine biosynthesis; L-histidine from 5-phospho-alpha-D-ribose 1-diphosphate: step 9/9. Its function is as follows. Catalyzes the sequential NAD-dependent oxidations of L-histidinol to L-histidinaldehyde and then to L-histidine. This Parasynechococcus marenigrum (strain WH8102) protein is Histidinol dehydrogenase.